Consider the following 293-residue polypeptide: Putative F-box/kelch-repeat protein At4g34170 (293 aa).

An F-box domain is found at 9–55; that stretch reads VKTMLMLHDDLILNCLARVSRSNHPTLSLVCKRFHSLLASVELYQTR. Kelch repeat units lie at residues 94–140, 141–187, and 226–272; these read NIDA…TLDG, KIYV…ESVR, and SYCV…LADY.

This is Putative F-box/kelch-repeat protein At4g34170 from Arabidopsis thaliana (Mouse-ear cress).